Consider the following 173-residue polypeptide: Co-chaperone protein HscB homolog (173 aa).

In terms of domain architecture, J spans 5 to 77 (CHFALFELQP…AQRARYLLTI (73 aa)).

The protein belongs to the HscB family. Interacts with HscA and stimulates its ATPase activity.

Co-chaperone involved in the maturation of iron-sulfur cluster-containing proteins. Seems to help targeting proteins to be folded toward HscA. The chain is Co-chaperone protein HscB homolog from Pseudomonas fluorescens (strain Pf0-1).